We begin with the raw amino-acid sequence, 209 residues long: Uracil phosphoribosyltransferase (209 aa).

Residues Arg-79, Arg-104, and 131–139 (DPMLATGGS) each bind 5-phospho-alpha-D-ribose 1-diphosphate. Residues Ile-194 and 199-201 (GDA) contribute to the uracil site. Asp-200 is a binding site for 5-phospho-alpha-D-ribose 1-diphosphate.

Belongs to the UPRTase family. Requires Mg(2+) as cofactor.

The catalysed reaction is UMP + diphosphate = 5-phospho-alpha-D-ribose 1-diphosphate + uracil. It functions in the pathway pyrimidine metabolism; UMP biosynthesis via salvage pathway; UMP from uracil: step 1/1. Allosterically activated by GTP. Functionally, catalyzes the conversion of uracil and 5-phospho-alpha-D-ribose 1-diphosphate (PRPP) to UMP and diphosphate. The sequence is that of Uracil phosphoribosyltransferase from Clostridium kluyveri (strain NBRC 12016).